The sequence spans 357 residues: MAEQWGKQVFAARRQNEDTTRGSAFTYTNSNHTRDPFEGPNYHIAPRWVYNLATLWMFFVVVLSVFTNGLVLVATAKFKKLRHPLNWILSNLAIADLGETVFASTISVCNQFFGYFILGHPMCVFEGYVVSTCGIAALWSLTIISWERWVVVCKPFGNVKFDAKWAIGGIVFSWVWSAVWCAPPVFGWSRYWPHGLKTSCGPDVFSGSDDPGVQSYMIVLMITCCIIPLAIIILCYLAVWLAIRAVAMQQKESESTQKAEREVSRMVVVMIVAYCVCWGPYTFFACFAAANPGYAFHPLAAAMPAYFAKSATIYNPVIYVFMNRQFRTCIMQLFGKQVDDGSEVSTSKTEVSSVAPA.

Topologically, residues methionine 1 to valine 49 are extracellular. Asparagine 31 carries N-linked (GlcNAc...) asparagine glycosylation. A helical transmembrane segment spans residues tyrosine 50–alanine 74. Topologically, residues threonine 75 to asparagine 86 are cytoplasmic. The helical transmembrane segment at tryptophan 87–phenylalanine 112 threads the bilayer. The Extracellular portion of the chain corresponds to phenylalanine 113–glutamate 126. A disulfide bridge connects residues cysteine 123 and cysteine 200. Residues glycine 127–tryptophan 146 traverse the membrane as a helical segment. The Cytoplasmic portion of the chain corresponds to glutamate 147 to tryptophan 165. The chain crosses the membrane as a helical span at residues alanine 166–serine 189. The Extracellular portion of the chain corresponds to arginine 190–serine 215. The helical transmembrane segment at tyrosine 216–isoleucine 243 threads the bilayer. The Cytoplasmic portion of the chain corresponds to arginine 244 to arginine 265. Residues methionine 266–alanine 289 traverse the membrane as a helical segment. The Extracellular segment spans residues alanine 290 to histidine 297. The chain crosses the membrane as a helical span at residues proline 298 to methionine 322. Lysine 309 is modified (N6-(retinylidene)lysine). Over asparagine 323–alanine 357 the chain is Cytoplasmic.

It belongs to the G-protein coupled receptor 1 family. Opsin subfamily. Post-translationally, phosphorylated on some or all of the serine and threonine residues present in the C-terminal region. The color pigments are found in the cone photoreceptor cells.

Its subcellular location is the membrane. Visual pigments are the light-absorbing molecules that mediate vision. They consist of an apoprotein, opsin, covalently linked to cis-retinal. The sequence is that of Red-sensitive opsin from Oryzias latipes (Japanese rice fish).